The chain runs to 489 residues: Lysine-specific permease LysP (489 aa).

Over 2-22 the chain is Cytoplasmic; it reads VSETKTTEAPGLRRELKARHL. The chain crosses the membrane as a helical span at residues 23-43; it reads TMIAIGGSIGTGLFVASGATI. At 44–45 the chain is on the periplasmic side; sequence SQ. Residues 46–66 form a helical membrane-spanning segment; that stretch reads AGPGGALLSYMLIGLMVYFLM. At 67-105 the chain is on the cytoplasmic side; sequence TSLGELAAYMPVSGSFATYGQNYVEEGFGFALGWNYWYN. A helical transmembrane segment spans residues 106 to 126; that stretch reads WAVTIAVDLVAAQLVMSWWFP. Over 127 to 128 the chain is Periplasmic; the sequence is DT. The chain crosses the membrane as a helical span at residues 129–149; the sequence is PGWIWSALFLGVIFLLNYISV. At 150-161 the chain is on the cytoplasmic side; the sequence is RGFGEAEYWFSL. The helical transmembrane segment at 162–182 threads the bilayer; that stretch reads IKVTTVIVFIIVGVLMIIGIF. The Periplasmic portion of the chain corresponds to 183–197; the sequence is KGAQPAGWSNWTIGE. A helical transmembrane segment spans residues 198–218; it reads APFAGGFAAMIGVAMIVGFSF. Over 219–244 the chain is Cytoplasmic; it reads QGTELIGIAAGESEDPAKNIPRAVRQ. A helical transmembrane segment spans residues 245–265; it reads VFWRILLFYVFAILIISLIIP. Over 266-290 the chain is Periplasmic; the sequence is YTDPSLLRNDVKDISVSPFTLVFQH. Residues 291–311 form a helical membrane-spanning segment; sequence AGLLSAAAVMNAVILTAVLSA. At 312 to 346 the chain is on the cytoplasmic side; the sequence is GNSGMYASTRMLYTLACDGKAPRIFAKLSRGGVPR. Residues 347–367 traverse the membrane as a helical segment; the sequence is NALYATTVIAGLCFLTSMFGN. The Periplasmic segment spans residues 368 to 370; that stretch reads QTV. The chain crosses the membrane as a helical span at residues 371-391; it reads YLWLLNTSGMTGFIAWLGIAI. The Cytoplasmic portion of the chain corresponds to 392–413; it reads SHYRFRRGYVLQGHDINDLPYR. A helical transmembrane segment spans residues 414-434; it reads SGFFPLGPIFAFILCLIITLG. The Periplasmic segment spans residues 435–446; it reads QNYEAFLKDTID. A helical transmembrane segment spans residues 447–467; that stretch reads WGGVAATYIGIPLFLIIWFGY. The Cytoplasmic portion of the chain corresponds to 468–489; sequence KLIKGTHFVRYSEMKFPQNDKK.

Belongs to the amino acid-polyamine-organocation (APC) superfamily. Amino acid transporter (AAT) (TC 2.A.3.1) family. In terms of assembly, interacts strongly with the transcriptional activator CadC in the absence of lysine or at low lysine concentrations. Interaction is markedly attenuated under increasing lysine levels. Concomitant pH-dependent protonation of periplasmic amino acids in both proteins dissolves their electrostatic connections resulting in further destabilization of the CadC/LysP interaction. Low pH promotes oligomerization of LysP.

The protein resides in the cell inner membrane. The catalysed reaction is L-lysine(out) + H(+)(out) = L-lysine(in) + H(+)(in). Permease involved in lysine uptake. In addition, functions as a lysine sensor that mediates the lysine-dependent regulation of the transcriptional activator CadC. In the absence of lysine, or at low lysine concentrations, LysP inhibits CadC by an interaction with the transmembrane domain of CadC. In the presence of lysine, LysP loses its ability to interact with and inhibit CadC, and acts as a lysine permease. In Escherichia coli (strain K12), this protein is Lysine-specific permease LysP.